The primary structure comprises 837 residues: Translation initiation factor IF-2 (837 aa).

The span at 97–139 shows a compositional bias: basic and acidic residues; that stretch reads AEEIEAEQRRELEEQRAAEEAARLKAEQEARERAEEEARRQAE. Residues 97–253 form a disordered region; the sequence is AEEIEAEQRR…QHGFQSPTGP (157 aa). Residues 140 to 175 show a composition bias toward low complexity; sequence AAKAQTAETAAPAAAESASSAEPAQVVAAVEAAAPA. The segment covering 176–197 has biased composition (basic and acidic residues); that stretch reads PERKKEEPRRVEKPRSDDDERR. Basic residues predominate over residues 198 to 208; that stretch reads DRKHAQHRPSL. The segment covering 219–229 has biased composition (basic and acidic residues); that stretch reads RSGEDEADGFR. Positions 230 to 244 are enriched in basic residues; it reads RGGRGGKSKLKKRNQ. The tr-type G domain maps to 337-504; that stretch reads ARAPVVTVMG…AVLLQAEILE (168 aa). The interval 346–353 is G1; that stretch reads GHVDHGKT. 346-353 contributes to the GTP binding site; that stretch reads GHVDHGKT. The tract at residues 371–375 is G2; that stretch reads GITQH. Residues 392–395 form a G3 region; the sequence is DTPG. Residues 392–396 and 446–449 contribute to the GTP site; these read DTPGH and NKID. Positions 446–449 are G4; that stretch reads NKID. The tract at residues 482–484 is G5; that stretch reads SAK.

The protein belongs to the TRAFAC class translation factor GTPase superfamily. Classic translation factor GTPase family. IF-2 subfamily.

The protein localises to the cytoplasm. One of the essential components for the initiation of protein synthesis. Protects formylmethionyl-tRNA from spontaneous hydrolysis and promotes its binding to the 30S ribosomal subunits. Also involved in the hydrolysis of GTP during the formation of the 70S ribosomal complex. This is Translation initiation factor IF-2 from Stutzerimonas stutzeri (strain A1501) (Pseudomonas stutzeri).